We begin with the raw amino-acid sequence, 348 residues long: MRKLAHNFYKPLAIGAPEPIRELPVRPERVVHFFPPHVEKIRARIPEVAKQVDVLCGNLEDAIPMDAKEAARNGFIEVVKATDFGDTALWVRVNALNSPWVLDDIAEIVAAVGNKLDVIMIPKVEGPWDIHFVDQYLALLEARHQIKKPILIHALLETAQGMVNLEEIAGASPRMHGFSLGPADLAASRGMKTTRVGGGHPFYGVLADPQEGQAERPFYQQDLWHYTIARMVDVAVAHGLRAFYGPFGDIKDEAACEAQFRNAFLLGCTGAWSLAPNQIPIAKRVFSPDVNEVLFAKRILEAMPDGSGVAMIDGKMQDDATWKQAKVIVDLARMIAKKDPDLAQAYGL.

Substrate-binding positions include 32–33 (HF), Lys40, and Arg92. The Mg(2+) site is built by Glu157 and Asp184. Residues 183 to 184 (AD) and Leu274 contribute to the substrate site.

Belongs to the HpcH/HpaI aldolase family. As to quaternary structure, homohexamer. Dimer of trimers. The cofactor is Mg(2+). Requires Mn(2+) as cofactor.

It carries out the reaction (S)-malyl-CoA = glyoxylate + acetyl-CoA. The enzyme catalyses (2R,3S)-beta-methylmalyl-CoA = propanoyl-CoA + glyoxylate. It catalyses the reaction (3S)-citramalyl-CoA = pyruvate + acetyl-CoA. Inhibited by oxalate. Its function is as follows. Involved in the 3-hydroxypropionate cycle used for autotrophic carbon dioxide fixation, and in the glyoxylate assimilation cycle used to regenerate acetyl-CoA and produce pyruvate as universal precursor for biosynthesis. As a part of the 3-hydroxypropionate cycle, it catalyzes the cleavage of (S)-malyl-CoA to yield acetyl-CoA and glyoxylate. As part of the glyoxylate assimilation cycle, it catalyzes the condensation of glyoxylate with propionyl-CoA to yield (2R,3S)-beta-methylmalyl-CoA, and catalyzes the cleavage of (S)-citramalyl-CoA to yield acetyl-CoA and pyruvate. This chain is Malyl-CoA/beta-methylmalyl-CoA/citramalyl-CoA lyase (mcl), found in Chloroflexus aurantiacus.